The following is a 709-amino-acid chain: ATP-dependent zinc metalloprotease FtsH (709 aa).

Topologically, residues 1–25 are cytoplasmic; it reads MKKNKGLNEATTSEKPQFPKRTAWK. A helical membrane pass occupies residues 26–46; the sequence is IFWWVVILAIIIGILVYILMP. The Extracellular portion of the chain corresponds to 47–171; sequence RATTAVIEKW…FVAPDTRARD (125 aa). A helical transmembrane segment spans residues 172 to 192; the sequence is VLNIFFGLLPIIIFVIFFLLF. Topologically, residues 193-709 are cytoplasmic; that stretch reads WRSARGISGG…DTEKDSETNS (517 aa). Residue 268–275 coordinates ATP; sequence GPPGTGKT. Residue His490 coordinates Zn(2+). Glu491 is an active-site residue. The Zn(2+) site is built by His494 and Asp569. The interval 673–709 is disordered; the sequence is ILAQKQEQQAKQKAEAKEAKLNKKTEKDTEKDSETNS. Residues 680–709 show a composition bias toward basic and acidic residues; sequence QQAKQKAEAKEAKLNKKTEKDTEKDSETNS.

This sequence in the central section; belongs to the AAA ATPase family. It in the C-terminal section; belongs to the peptidase M41 family. Homohexamer. Zn(2+) is required as a cofactor.

The protein localises to the cell membrane. Its function is as follows. Acts as a processive, ATP-dependent zinc metallopeptidase for both cytoplasmic and membrane proteins. Plays a role in the quality control of integral membrane proteins. The sequence is that of ATP-dependent zinc metalloprotease FtsH from Mycoplasma pneumoniae (strain ATCC 29342 / M129 / Subtype 1) (Mycoplasmoides pneumoniae).